The following is a 130-amino-acid chain: Large ribosomal subunit protein bL12 (130 aa).

It belongs to the bacterial ribosomal protein bL12 family. As to quaternary structure, homodimer. Part of the ribosomal stalk of the 50S ribosomal subunit. Forms a multimeric L10(L12)X complex, where L10 forms an elongated spine to which 2 to 4 L12 dimers bind in a sequential fashion. Binds GTP-bound translation factors.

In terms of biological role, forms part of the ribosomal stalk which helps the ribosome interact with GTP-bound translation factors. Is thus essential for accurate translation. The polypeptide is Large ribosomal subunit protein bL12 (Mycobacterium leprae (strain TN)).